A 170-amino-acid chain; its full sequence is Cathelicidin antimicrobial peptide (170 aa).

The N-terminal stretch at methionine 1 to alanine 30 is a signal peptide. A propeptide spans glutamine 31–arginine 131 (cathelin-like domain (CLD)). Intrachain disulfides connect cysteine 86/cysteine 97 and cysteine 108/cysteine 125. The segment at phenylalanine 150–arginine 162 is active core.

This sequence belongs to the cathelicidin family. As to quaternary structure, monomer, homodimer or homotrimer (in vitro). Oligomerizes as tetra- or hexamer in solution (in vitro). Post-translationally, proteolytically cleaved by proteinase PRTN3 into antibacterial peptide LL-37. Proteolytically cleaved by cathepsin CTSG and neutrophil elastase ELANE. Resistant to proteolytic degradation in solution, and when bound to both zwitterionic (mimicking mammalian membranes) and negatively charged membranes (mimicking bacterial membranes). In terms of processing, after secretion onto the skin surface, the CAMP gene product is processed by a serine protease-dependent mechanism into multiple novel antimicrobial peptides distinct from and shorter than cathelicidin LL-37. These peptides show enhanced antimicrobial action, acquiring the ability to kill skin pathogens such as S.aureus, E.coli and C.albicans. These peptides have lost the ability to stimulate CXCL8/IL8 release from keratinocytes. The peptides act synergistically, killing bacteria at lower concentrations when present together, and maintain activity at increased salt condition.

It localises to the secreted. It is found in the vesicle. Antimicrobial protein that is an integral component of the innate immune system. Binds to bacterial lipopolysaccharides (LPS). Acts via neutrophil N-formyl peptide receptors to enhance the release of CXCL2. Postsecretory processing generates multiple cathelicidin antimicrobial peptides with various lengths which act as a topical antimicrobial defense in sweat on skin. The unprocessed precursor form, cathelicidin antimicrobial peptide, inhibits the growth of Gram-negative E.coli and E.aerogenes with efficiencies comparable to that of the mature peptide LL-37 (in vitro). Functionally, antimicrobial peptide that is an integral component of the innate immune system. Binds to bacterial lipopolysaccharides (LPS). Causes membrane permeabilization by forming transmembrane pores (in vitro). Causes lysis of E.coli. Exhibits antimicrobial activity against Gram-negative bacteria such as P.aeruginosa, S.typhimurium, E.aerogenes, E.coli and P.syringae, Gram-positive bacteria such as L.monocytogenes, S.epidermidis, S.pyogenes and S.aureus, as well as vancomycin-resistant enterococci (in vitro). Exhibits antimicrobial activity against methicillin-resistant S.aureus, P.mirabilis, and C.albicans in low-salt media, but not in media containing 100 mM NaCl (in vitro). Forms chiral supramolecular assemblies with quinolone signal (PQS) molecules of P.aeruginosa, which may lead to interference of bacterial quorum signaling and perturbance of bacterial biofilm formation. May form supramolecular fiber-like assemblies on bacterial membranes. Induces cytokine and chemokine producation as well as TNF/TNFA and CSF2/GMCSF production in normal human keratinocytes. Exhibits hemolytic activity against red blood cells. In terms of biological role, exhibits antimicrobial activity against E.coli and B.megaterium (in vitro). The polypeptide is Cathelicidin antimicrobial peptide (Pongo pygmaeus (Bornean orangutan)).